Here is a 681-residue protein sequence, read N- to C-terminus: VLLCSLVAATAAWPYFGGFQRDEPDGVPTAQKQHDINFLLHKLYEPLHEANLKALEDSFDPLAHTANMPDGGVAVNKLMQEVKTQHLEERHHWFSVFNATQREEALLLVKVLLQCQDWPTAIGNAVYFRKMMNEETYVYALYTAIKHSPLTKHVVLPPLYEIMPHFFTSSEVIQQAYRAKLIEKPGRFNMNFTGTQNNPEHKIAYFGEDIGLSTHYINWHIEYPFWWNETFGYQIERRGENYFWVHHQLVNRFEAERISNHLQKIEKLHWERNLHEGFDPHTSYKNGNPFPFRHDDIHIEDVDKVAEVRDMIVMENRIRDAIAHGYVIDKEGNKVDINNEHGIDILGDIIESCVYNPYNEYYGSLHNMGHMMLGHQGDPHAKYYDTPSVLEHYETALRDPAFYKLHKYIDDLFRKHKDHLKPYSQEDLLFPGVAVNMIDIDGPLETYFEDYEYSLMNAMDDKEEMIWEDSMEISAIIPRLRHKDFSFKVNIMNNNDENKLSTIRIFAWPHRDVNGVIMPFNEGRWHAIELDKFQKELIPGENTITRKSSESSVTVPDVPSLKSLHEQTEAAIAGSSELNLDEFVSATGLPNRLLIPKGNEAGVEFKLVVAVTDGVADSVNDEINLTTKFHHYGHHGVYLDKKPHGYPLDRRVPDERLFHEIPNFGETIVKVFNRDEHVYHH.

The N-terminal stretch at Val1–Arg21 is a signal peptide. N-linked (GlcNAc...) asparagine glycosylation is found at Asn98, Asn191, Asn228, and Asn624.

Belongs to the tyrosinase family. Hemocyanin subfamily. Hexamer. In terms of tissue distribution, strongly expressed in ovaries. Also expressed in heart. Not detected in hepatopancreas, gills, connective tissue or muscle.

Functionally, does not function as a hemocyanin. The protein is Pseudohemocyanin-2 of Homarus americanus (American lobster).